The following is a 218-amino-acid chain: Cytochrome b6 (218 aa).

A helical membrane pass occupies residues 35-55 (IFYCLGGITLVCFLIQFATGF). C38 is a heme c binding site. Heme b is bound by residues H89 and H103. The next 3 membrane-spanning stretches (helical) occupy residues 93–113 (ASMM…TGGF), 119–139 (LTWI…VTGY), and 189–209 (LHTF…FLMI). Residues H190 and H205 each contribute to the heme b site.

The protein belongs to the cytochrome b family. PetB subfamily. In terms of assembly, the 4 large subunits of the cytochrome b6-f complex are cytochrome b6, subunit IV (17 kDa polypeptide, PetD), cytochrome f and the Rieske protein, while the 4 small subunits are PetG, PetL, PetM and PetN. The complex functions as a dimer. Heme b serves as cofactor. Heme c is required as a cofactor.

It localises to the cellular thylakoid membrane. In terms of biological role, component of the cytochrome b6-f complex, which mediates electron transfer between photosystem II (PSII) and photosystem I (PSI), cyclic electron flow around PSI, and state transitions. The protein is Cytochrome b6 of Prochlorococcus marinus (strain NATL1A).